The chain runs to 145 residues: Ribonuclease P protein component (145 aa).

The segment covering L120–A130 has biased composition (low complexity). A disordered region spans residues L120–L145. Over residues H134 to L145 the composition is skewed to polar residues.

The protein belongs to the RnpA family. In terms of assembly, consists of a catalytic RNA component (M1 or rnpB) and a protein subunit.

The enzyme catalyses Endonucleolytic cleavage of RNA, removing 5'-extranucleotides from tRNA precursor.. RNaseP catalyzes the removal of the 5'-leader sequence from pre-tRNA to produce the mature 5'-terminus. It can also cleave other RNA substrates such as 4.5S RNA. The protein component plays an auxiliary but essential role in vivo by binding to the 5'-leader sequence and broadening the substrate specificity of the ribozyme. The polypeptide is Ribonuclease P protein component (Xanthomonas oryzae pv. oryzae (strain MAFF 311018)).